Here is a 398-residue protein sequence, read N- to C-terminus: MTYGEAVADVLEFGQSEGEPIGMAPEEWRAFAARASLHAARAKAKELGADPPWDCELAKTPEGYYQIRGGIPYAIAKSLAAAPFADILWMETKTADLADARQFAEAIHAEFPDQMLAYNLSPSFNWDTTGMTDEEMRRFPEELGKMGFVFNFITYGGHQIDGVAAEEFATALRQDGMLALARLQRKMRLVESPYRTPQTLVGGPRSDAALAASSGRTATTKAMGKGSTQHQHLVQTEVPRKLLEEWLAMWSGHYQLKDKLRVQLRPQRAGSEVLELGIHGESDDKLANVIFQPIQDRRGRTILLVRDQNTFGAELRQKRLMTLIHLWLVHRFKAQAVHYVTPTDDNLYQTSKMKSHGIFTEVNQEVGEIIVAEVNHPRIAELLTPDRVALRKLITKEA.

It belongs to the isocitrate lyase/PEP mutase superfamily. Isocitrate lyase family. It depends on Mg(2+) as a cofactor.

It carries out the reaction D-threo-isocitrate = glyoxylate + succinate. In terms of biological role, together with AceAa, they could catalyze the formation of succinate and glyoxylate from isocitrate. The sequence is that of Putative isocitrate lyase subunit B (aceAb) from Mycobacterium tuberculosis (strain ATCC 25618 / H37Rv).